We begin with the raw amino-acid sequence, 304 residues long: PTB domain-containing engulfment adapter protein 1 (304 aa).

The residue at position 16 (Thr16) is a Phosphothreonine. Positions 21–176 (SKHYIPYNAK…AGMQKRIQDL (156 aa)) constitute a PID domain. A coiled-coil region spans residues 159–200 (DVETRKQIAGMQKRIQDLETENMELKNKVQDLESRLRTTQVS). A Phosphoserine modification is found at Ser223.

Belongs to the ced-6 family. In terms of assembly, homodimer. Interacts with clathrin and MEGF10. Interacts with GDP-bound ARF6, but not with GTP-bound ARF6. Part of a complex composed of GULP1, ACAP1 and ARF6. Interacts with ACAP1, LRP1 and STAB2. In terms of tissue distribution, detected throughout the brain, particularly in Purkinje cells, hippocampal and cortical neurons (at protein level).

The protein resides in the cytoplasm. Its function is as follows. Modulates cellular glycosphingolipid and cholesterol transport. May play a role in the internalization of various LRP1 ligands, such as PSAP. May function as an adapter protein. Required for efficient phagocytosis of apoptotic cells. Increases cellular levels of GTP-bound ARF6. This chain is PTB domain-containing engulfment adapter protein 1 (Gulp1), found in Mus musculus (Mouse).